Reading from the N-terminus, the 479-residue chain is Sulfate adenylyltransferase subunit 1 (479 aa).

Residues 25–239 (KSLLRFLTCG…EVLETVDIQR (215 aa)) form the tr-type G domain. The G1 stretch occupies residues 34–41 (GSVDDGKS). 34-41 (GSVDDGKS) is a binding site for GTP. Residues 92–96 (GITID) are G2. Residues 113–116 (DTPG) form a G3 region. GTP contacts are provided by residues 113 to 117 (DTPGH) and 168 to 171 (NKMD). Residues 168–171 (NKMD) are G4. Residues 206–208 (SAL) are G5.

It belongs to the TRAFAC class translation factor GTPase superfamily. Classic translation factor GTPase family. CysN/NodQ subfamily. In terms of assembly, heterodimer composed of CysD, the smaller subunit, and CysN.

It carries out the reaction sulfate + ATP + H(+) = adenosine 5'-phosphosulfate + diphosphate. The protein operates within sulfur metabolism; hydrogen sulfide biosynthesis; sulfite from sulfate: step 1/3. With CysD forms the ATP sulfurylase (ATPS) that catalyzes the adenylation of sulfate producing adenosine 5'-phosphosulfate (APS) and diphosphate, the first enzymatic step in sulfur assimilation pathway. APS synthesis involves the formation of a high-energy phosphoric-sulfuric acid anhydride bond driven by GTP hydrolysis by CysN coupled to ATP hydrolysis by CysD. The polypeptide is Sulfate adenylyltransferase subunit 1 (Salmonella typhi).